The chain runs to 265 residues: 4-hydroxy-tetrahydrodipicolinate reductase (265 aa).

NAD(+)-binding positions include 7–12 (GASGRM) and Asp-33. Residue Arg-34 participates in NADP(+) binding. NAD(+)-binding positions include 96–98 (GTT) and 120–123 (AANM). Catalysis depends on His-153, which acts as the Proton donor/acceptor. Residue His-154 participates in (S)-2,3,4,5-tetrahydrodipicolinate binding. Lys-157 acts as the Proton donor in catalysis. 163 to 164 (GT) provides a ligand contact to (S)-2,3,4,5-tetrahydrodipicolinate.

The protein belongs to the DapB family.

It is found in the cytoplasm. It carries out the reaction (S)-2,3,4,5-tetrahydrodipicolinate + NAD(+) + H2O = (2S,4S)-4-hydroxy-2,3,4,5-tetrahydrodipicolinate + NADH + H(+). The catalysed reaction is (S)-2,3,4,5-tetrahydrodipicolinate + NADP(+) + H2O = (2S,4S)-4-hydroxy-2,3,4,5-tetrahydrodipicolinate + NADPH + H(+). The protein operates within amino-acid biosynthesis; L-lysine biosynthesis via DAP pathway; (S)-tetrahydrodipicolinate from L-aspartate: step 4/4. Functionally, catalyzes the conversion of 4-hydroxy-tetrahydrodipicolinate (HTPA) to tetrahydrodipicolinate. This Burkholderia ambifaria (strain MC40-6) protein is 4-hydroxy-tetrahydrodipicolinate reductase.